The primary structure comprises 152 residues: Aspartate carbamoyltransferase regulatory chain (152 aa).

Cys107, Cys112, Cys136, and Cys139 together coordinate Zn(2+).

The protein belongs to the PyrI family. As to quaternary structure, contains catalytic and regulatory chains. Zn(2+) serves as cofactor.

Its function is as follows. Involved in allosteric regulation of aspartate carbamoyltransferase. The protein is Aspartate carbamoyltransferase regulatory chain of Chromobacterium violaceum (strain ATCC 12472 / DSM 30191 / JCM 1249 / CCUG 213 / NBRC 12614 / NCIMB 9131 / NCTC 9757 / MK).